Here is a 335-residue protein sequence, read N- to C-terminus: Methionine import ATP-binding protein MetN (335 aa).

In terms of domain architecture, ABC transporter spans 2 to 241 (IQFQRLHKSY…PKHATTRRFV (240 aa)). 38 to 45 (GHSGAGKS) contacts ATP.

This sequence belongs to the ABC transporter superfamily. Methionine importer (TC 3.A.1.24) family. The complex is composed of two ATP-binding proteins (MetN), two transmembrane proteins (MetI) and a solute-binding protein (MetQ).

It is found in the cell inner membrane. The catalysed reaction is L-methionine(out) + ATP + H2O = L-methionine(in) + ADP + phosphate + H(+). The enzyme catalyses D-methionine(out) + ATP + H2O = D-methionine(in) + ADP + phosphate + H(+). In terms of biological role, part of the ABC transporter complex MetNIQ involved in methionine import. Responsible for energy coupling to the transport system. The sequence is that of Methionine import ATP-binding protein MetN from Xanthomonas euvesicatoria pv. vesicatoria (strain 85-10) (Xanthomonas campestris pv. vesicatoria).